Consider the following 439-residue polypeptide: Damage-control phosphatase ARMT1 (439 aa).

N-acetylalanine is present on Ala2. The residue at position 4 (Ser4) is a Phosphoserine. Position 40 is an N6-acetyllysine (Lys40). Residues Asp251 and Asn252 each coordinate Mn(2+). Residue 251–252 (DN) coordinates substrate. Glu256 and Asp289 together coordinate S-adenosyl-L-methionine. Asp289 provides a ligand contact to Mn(2+). Residues 365-369 (DLNYR) and Lys402 each bind substrate. The short motif at 399–402 (RTLK) is the Subfamily III RTxK motif element.

It belongs to the damage-control phosphatase family. Sugar phosphate phosphatase III subfamily. It depends on Mn(2+) as a cofactor. The cofactor is Ni(2+). Post-translationally, automethylated.

The catalysed reaction is beta-D-fructose 1-phosphate + H2O = D-fructose + phosphate. The enzyme catalyses beta-D-fructose 6-phosphate = dihydroxyacetone + D-glyceraldehyde 3-phosphate. It carries out the reaction L-glutamyl-[protein] + S-adenosyl-L-methionine = [protein]-L-glutamate 5-O-methyl ester + S-adenosyl-L-homocysteine. Metal-dependent phosphatase that shows phosphatase activity against several substrates, including fructose-1-phosphate and fructose-6-phosphate. Its preference for fructose-1-phosphate, a strong glycating agent that causes DNA damage rather than a canonical yeast metabolite, suggests a damage-control function in hexose phosphate metabolism. Has also been shown to have O-methyltransferase activity that methylates glutamate residues of target proteins to form gamma-glutamyl methyl ester residues. Possibly methylates PCNA, suggesting it is involved in the DNA damage response. The sequence is that of Damage-control phosphatase ARMT1 from Rattus norvegicus (Rat).